We begin with the raw amino-acid sequence, 153 residues long: MIQELKADLNGKGQKHCVIVSRFNEFITENLLKGALESFRMHGVREEDVTVVRVPGAYEMPVVVAKVAASKKYNSIVCLGAVIRGATAHFDFVAGESAKIGSIGVQHSIPVVFGVLTTDTIEQAIERAGTKAGNKGAEAAATAVEMVNLLSLL.

5-amino-6-(D-ribitylamino)uracil-binding positions include Phe23, Ala57–Glu59, and Ala81–Ile83. A (2S)-2-hydroxy-3-oxobutyl phosphate-binding site is contributed by Ala86–Thr87. His89 (proton donor) is an active-site residue. Phe113 lines the 5-amino-6-(D-ribitylamino)uracil pocket. Arg127 contacts (2S)-2-hydroxy-3-oxobutyl phosphate.

Belongs to the DMRL synthase family.

It carries out the reaction (2S)-2-hydroxy-3-oxobutyl phosphate + 5-amino-6-(D-ribitylamino)uracil = 6,7-dimethyl-8-(1-D-ribityl)lumazine + phosphate + 2 H2O + H(+). It functions in the pathway cofactor biosynthesis; riboflavin biosynthesis; riboflavin from 2-hydroxy-3-oxobutyl phosphate and 5-amino-6-(D-ribitylamino)uracil: step 1/2. Catalyzes the formation of 6,7-dimethyl-8-ribityllumazine by condensation of 5-amino-6-(D-ribitylamino)uracil with 3,4-dihydroxy-2-butanone 4-phosphate. This is the penultimate step in the biosynthesis of riboflavin. This Leptospira borgpetersenii serovar Hardjo-bovis (strain JB197) protein is 6,7-dimethyl-8-ribityllumazine synthase.